The chain runs to 377 residues: Putrescine transport ATP-binding protein PotG (377 aa).

One can recognise an ABC transporter domain in the interval 20 to 250 (LEIRNLTKSY…PTTRYSAEFI (231 aa)). An ATP-binding site is contributed by 52-59 (GASGCGKS).

The protein belongs to the ABC transporter superfamily. The complex is composed of two ATP-binding proteins (PotG), two transmembrane proteins (PotH and PotI) and a solute-binding protein (PotF).

The protein localises to the cell inner membrane. It catalyses the reaction putrescine(out) + ATP + H2O = putrescine(in) + ADP + phosphate + H(+). With respect to regulation, transport is feedback inhibited by intracellular polyamines. Part of the ABC transporter complex PotFGHI involved in putrescine uptake. Responsible for energy coupling to the transport system. Imports putrescine for maintenance of the optimal concentration of polyamines necessary for cell growth in the presence of glucose. This chain is Putrescine transport ATP-binding protein PotG, found in Escherichia coli (strain K12).